The following is a 254-amino-acid chain: MQYQVDTHTHTVASSHAYSTIHDYIAVAKQKGIRLFANTDHGPAMADAPHFWHFVNLRVLPRMVDGVGILRGIEANIKNIDGEIDFFGDYLKQLDIVLAGFHEPVYPPSDKATHTEAMINTIKSGKVDIITHPGNPAYPIDIEAVARAAAEYGVALEINNSSFEVSRKGSEANCTAIAKAAKEFGTILVMGSDSHVAFSLGGFARAQAIIDEVAYPPSRLLNRSPSALLTFLAARGHETVADLIPLFSDDEPCC.

His8, His10, His16, His41, Glu74, His102, His132, Asp193, and His195 together coordinate Zn(2+).

This sequence belongs to the PHP family. The cofactor is Zn(2+).

This is Probable phosphatase Shew185_1467 from Shewanella baltica (strain OS185).